The chain runs to 222 residues: Orotate phosphoribosyltransferase (222 aa).

K29 is a 5-phospho-alpha-D-ribose 1-diphosphate binding site. Residue F37–F38 participates in orotate binding. Residues Y75–K76, R101, K102, K105, H107, and D126–S134 each bind 5-phospho-alpha-D-ribose 1-diphosphate. The orotate site is built by S130 and R158.

It belongs to the purine/pyrimidine phosphoribosyltransferase family. PyrE subfamily. As to quaternary structure, homodimer. It depends on Mg(2+) as a cofactor.

It carries out the reaction orotidine 5'-phosphate + diphosphate = orotate + 5-phospho-alpha-D-ribose 1-diphosphate. It functions in the pathway pyrimidine metabolism; UMP biosynthesis via de novo pathway; UMP from orotate: step 1/2. In terms of biological role, catalyzes the transfer of a ribosyl phosphate group from 5-phosphoribose 1-diphosphate to orotate, leading to the formation of orotidine monophosphate (OMP). This chain is Orotate phosphoribosyltransferase, found in Polynucleobacter asymbioticus (strain DSM 18221 / CIP 109841 / QLW-P1DMWA-1) (Polynucleobacter necessarius subsp. asymbioticus).